The following is a 199-amino-acid chain: Superoxide dismutase [Cu-Zn] (199 aa).

An N-terminal signal peptide occupies residues 1–22; that stretch reads MKLTKVALFSLGLFGFSSMALA. Residues His-92, His-94, and His-117 each coordinate Cu cation. Cysteines 99 and 195 form a disulfide. His-117, His-126, His-135, and Asp-138 together coordinate Zn(2+). Residue His-173 coordinates Cu cation.

This sequence belongs to the Cu-Zn superoxide dismutase family. As to quaternary structure, homodimer. The cofactor is Cu cation. It depends on Zn(2+) as a cofactor.

It is found in the periplasm. It catalyses the reaction 2 superoxide + 2 H(+) = H2O2 + O2. Destroys radicals which are normally produced within the cells and which are toxic to biological systems. May play a role in the interactive biology of organisms with their hosts and so contribute to their capacity to cause disease. The protein is Superoxide dismutase [Cu-Zn] (sodC) of Haemophilus ducreyi (strain 35000HP / ATCC 700724).